A 73-amino-acid polypeptide reads, in one-letter code: MSAQTASGPTEDQVEILEYNFNKVNKHPDPTTLCLIAAEAGLTEEQTQKWFKQRLAEWRRSEGLPSECRSVTD.

Residues 3–62 (AQTASGPTEDQVEILEYNFNKVNKHPDPTTLCLIAAEAGLTEEQTQKWFKQRLAEWRRSE) constitute a DNA-binding region (homeobox; degenerate).

Interacts with serum response factor (SRF). Component of a large complex containing histone deacetylases such as HDAC2. Interacts with the acetylated forms of HSPA1A and HSPA1B. Interacts with HSPA8. Expressed in the embryonic and adult heart and in the adult brain, liver, lung, skeletal muscle, intestine and spleen. Throughout embryonic and postnatal development, it is expressed in the myocardium.

The protein localises to the nucleus. It localises to the cytoplasm. Functionally, atypical homeodomain protein which does not bind DNA and is required to modulate cardiac growth and development. Acts via its interaction with SRF, thereby modulating the expression of SRF-dependent cardiac-specific genes and cardiac development. Prevents SRF-dependent transcription either by inhibiting SRF binding to DNA or by recruiting histone deacetylase (HDAC) proteins that prevent transcription by SRF. Overexpression causes cardiac hypertrophy. Acts as a co-chaperone for HSPA1A and HSPA1B chaperone proteins and assists in chaperone-mediated protein refolding. The chain is Homeodomain-only protein (Hopx) from Mus musculus (Mouse).